The primary structure comprises 436 residues: 4-hydroxyphenylpyruvate dioxygenase (436 aa).

2 consecutive VOC domains span residues 38–194 and 210–370; these read RFHH…GFEV and RLDH…IFTK. 3 residues coordinate Fe cation: His-213, His-295, and Glu-381.

The protein belongs to the 4HPPD family. Requires Fe cation as cofactor.

It is found in the cytoplasm. It catalyses the reaction 3-(4-hydroxyphenyl)pyruvate + O2 = homogentisate + CO2. It participates in amino-acid degradation; L-phenylalanine degradation; acetoacetate and fumarate from L-phenylalanine: step 3/6. Its pathway is cofactor biosynthesis; prenylquinone biosynthesis. The protein is 4-hydroxyphenylpyruvate dioxygenase of Plectranthus scutellarioides (Coleus).